The primary structure comprises 502 residues: MAEPETCDLFVIGGGINGAGVARDAAGRGLKVVLAEKDDLAQGTSSRSGKLVHGGLRYLEYYEFRLVREALIEREVLLNAAPHIIWPMRFVLPHSPQDRPAWLVRLGLFLYDHLGGRKKLPGTRTLDLKRDPEGTPILDQYTKGFEYSDCWVDDARLVALNAVGAAEKGATILTRTPVVSARRENGGWIVETRNSDTGETRTFRARCIVNCAGPWVTDVIHNVAASTSSRNVRLVKGSHIIVPKFWSGANAYLVQNHDKRVIFINPYEGDKALIGTTDIAYEGRAEDVAADEKEIDYLITAVNRYFKEKLRREDVLHSFSGVRPLFDDGKGNPSAVTRDYVFDLDETGGAPLLNVFGGKITTFRELAERGMHRLKHIFPQMGGDWTHDAPLPGGEIANADYETFANTLRDTYPWMPRTLVHHYGRLYGARTKDVVAGAQNLEGLGRHFGGDFHEAEVRYLVAREWAKTAEDILYRRTKHYLHLTEAERAAFVEWFDNANLVA.

8–36 (DLFVIGGGINGAGVARDAAGRGLKVVLAE) contributes to the FAD binding site.

The protein belongs to the FAD-dependent glycerol-3-phosphate dehydrogenase family. It depends on FAD as a cofactor.

The enzyme catalyses D-erythritol 1-phosphate + NADP(+) = D-erythrulose 1-phosphate + NADPH + H(+). It functions in the pathway carbohydrate metabolism; erythritol degradation. Its function is as follows. Catalyzes the oxydation of D-erythritol 1-phosphate to D-erythrulose 1-phosphate. The chain is D-erythritol 1-phosphate dehydrogenase from Brucella abortus (strain 2308).